Consider the following 2291-residue polypeptide: Spectrin beta chain (2291 aa).

Residues 1–271 (MTTDISIVRW…IITYVVTYYH (271 aa)) are actin-binding. Calponin-homology (CH) domains lie at 50 to 154 (SVQK…LRFQ) and 169 to 274 (KSAK…HYFS). 17 Spectrin repeats span residues 300–408 (VHDY…ALRE), 420–521 (AARF…MRLE), 525–633 (QLQQ…RLEE), 636–739 (KLWQ…RLEN), 743–843 (YFQL…QRLL), 848–948 (LYKL…MDDL), 954–1057 (VQTF…KLEE), 1060–1166 (DLHR…VLLS), 1170–1272 (DQQL…EKLK), 1276–1376 (KLHE…GAML), 1386–1484 (QQTC…KALE), 1488–1591 (EAFQ…HLLE), 1594–1697 (KVQQ…RLNE), 1701–1802 (LFML…TQML), 1807–1909 (ELHK…QKLA), 1913–2015 (DLFR…ENLQ), and 2020–2089 (VYQF…KEMK). The segment covering 2097–2140 (EAERQRIKEEQEAKAASEAAEQAKREAERRDDVDVGASHDDSER) has biased composition (basic and acidic residues). The tract at residues 2097–2152 (EAERQRIKEEQEAKAASEAAEQAKREAERRDDVDVGASHDDSERGGTPGAGEGHEG) is disordered. The PH domain maps to 2147–2259 (GEGHEGYVTR…WVTSLKAQSD (113 aa)). S2195 bears the Phosphoserine mark. Polar residues predominate over residues 2262 to 2275 (AVAASRSQTLPATS). Residues 2262–2291 (AVAASRSQTLPATSQKDEPKRRSFFTLKKK) are disordered.

The protein belongs to the spectrin family. As to quaternary structure, native spectrin molecule is a tetramer composed of two antiparallel heterodimers joined head to head so that each end of the native molecule includes the C-terminus of the alpha subunit and the N-terminus of the beta subunit.

It localises to the cytoplasm. The protein localises to the cytoskeleton. It is found in the cell cortex. Functionally, spectrin is the major constituent of the cytoskeletal network underlying the erythrocyte plasma membrane. It associates with band 4.1 and actin to form the cytoskeletal superstructure of the erythrocyte plasma membrane. Interacts with calmodulin in a calcium-dependent manner. The protein is Spectrin beta chain (beta-Spec) of Drosophila melanogaster (Fruit fly).